Here is a 411-residue protein sequence, read N- to C-terminus: Serine hydroxymethyltransferase (411 aa).

120–122 provides a ligand contact to (6S)-5,6,7,8-tetrahydrofolate; that stretch reads GHL. Residue lysine 225 is modified to N6-(pyridoxal phosphate)lysine. A (6S)-5,6,7,8-tetrahydrofolate-binding site is contributed by 350–352; sequence SPF.

The protein belongs to the SHMT family. As to quaternary structure, homodimer. It depends on pyridoxal 5'-phosphate as a cofactor.

It is found in the cytoplasm. The enzyme catalyses (6R)-5,10-methylene-5,6,7,8-tetrahydrofolate + glycine + H2O = (6S)-5,6,7,8-tetrahydrofolate + L-serine. Its pathway is one-carbon metabolism; tetrahydrofolate interconversion. It participates in amino-acid biosynthesis; glycine biosynthesis; glycine from L-serine: step 1/1. In terms of biological role, catalyzes the reversible interconversion of serine and glycine with tetrahydrofolate (THF) serving as the one-carbon carrier. This reaction serves as the major source of one-carbon groups required for the biosynthesis of purines, thymidylate, methionine, and other important biomolecules. Also exhibits THF-independent aldolase activity toward beta-hydroxyamino acids, producing glycine and aldehydes, via a retro-aldol mechanism. The protein is Serine hydroxymethyltransferase of Limosilactobacillus reuteri (strain DSM 20016) (Lactobacillus reuteri).